A 389-amino-acid polypeptide reads, in one-letter code: Dual-specificity RNA methyltransferase RlmN (389 aa).

Residue Glu94 is the Proton acceptor of the active site. The region spanning 134-367 is the Radical SAM core domain; the sequence is PRVRVTQCIS…CFVRRRRGDD (234 aa). Cysteines 141 and 372 form a disulfide. Positions 148, 152, and 155 each coordinate [4Fe-4S] cluster. S-adenosyl-L-methionine is bound by residues 197-198, Ser229, 253-255, and Asn329; these read GE and SLH. Residue Cys372 is the S-methylcysteine intermediate of the active site.

Belongs to the radical SAM superfamily. RlmN family. [4Fe-4S] cluster serves as cofactor.

The protein localises to the cytoplasm. It catalyses the reaction adenosine(2503) in 23S rRNA + 2 reduced [2Fe-2S]-[ferredoxin] + 2 S-adenosyl-L-methionine = 2-methyladenosine(2503) in 23S rRNA + 5'-deoxyadenosine + L-methionine + 2 oxidized [2Fe-2S]-[ferredoxin] + S-adenosyl-L-homocysteine. The enzyme catalyses adenosine(37) in tRNA + 2 reduced [2Fe-2S]-[ferredoxin] + 2 S-adenosyl-L-methionine = 2-methyladenosine(37) in tRNA + 5'-deoxyadenosine + L-methionine + 2 oxidized [2Fe-2S]-[ferredoxin] + S-adenosyl-L-homocysteine. Specifically methylates position 2 of adenine 2503 in 23S rRNA and position 2 of adenine 37 in tRNAs. m2A2503 modification seems to play a crucial role in the proofreading step occurring at the peptidyl transferase center and thus would serve to optimize ribosomal fidelity. The protein is Dual-specificity RNA methyltransferase RlmN of Sorangium cellulosum (strain So ce56) (Polyangium cellulosum (strain So ce56)).